A 315-amino-acid polypeptide reads, in one-letter code: Energy-coupling factor transporter ATP-binding protein EcfA2 (315 aa).

Positions 31 to 275 constitute an ABC transporter domain; sequence IILDNVSYTY…QELLSKIQIE (245 aa). An ATP-binding site is contributed by 68-75; it reads GTTGSGKS.

This sequence belongs to the ABC transporter superfamily. Energy-coupling factor EcfA family. As to quaternary structure, forms a stable energy-coupling factor (ECF) transporter complex composed of 2 membrane-embedded substrate-binding proteins (S component), 2 ATP-binding proteins (A component) and 2 transmembrane proteins (T component).

Its subcellular location is the cell membrane. Its function is as follows. ATP-binding (A) component of a common energy-coupling factor (ECF) ABC-transporter complex. Unlike classic ABC transporters this ECF transporter provides the energy necessary to transport a number of different substrates. In Mesoplasma florum (strain ATCC 33453 / NBRC 100688 / NCTC 11704 / L1) (Acholeplasma florum), this protein is Energy-coupling factor transporter ATP-binding protein EcfA2.